The chain runs to 217 residues: MAYILPGSSLDADLYAITDDALSFNRSVIEVVKQLLDAGIRIIQYREKNKSSNSMLKDCITIKKLTEEANACFIVNDHVDIAVLCNADGVHLGQDDLPVDKVRELIGKEKIIGLSTHSPQQAQKAIEMGADYIGVGPLYPTKTKKDVCEPVTISYLDWVVSHIAIPFVAIGGIKQHNIQEVIQHGAKCCALVSEILSAPNIPLRIQELRQAILLAHT.

Residues glutamine 44–lysine 48 and asparagine 76 contribute to the 4-amino-2-methyl-5-(diphosphooxymethyl)pyrimidine site. Residues aspartate 77 and aspartate 96 each coordinate Mg(2+). Residue serine 115 participates in 4-amino-2-methyl-5-(diphosphooxymethyl)pyrimidine binding. Threonine 141 to threonine 143 serves as a coordination point for 2-[(2R,5Z)-2-carboxy-4-methylthiazol-5(2H)-ylidene]ethyl phosphate. Lysine 144 provides a ligand contact to 4-amino-2-methyl-5-(diphosphooxymethyl)pyrimidine. 2-[(2R,5Z)-2-carboxy-4-methylthiazol-5(2H)-ylidene]ethyl phosphate-binding positions include glycine 172 and valine 192–serine 193.

It belongs to the thiamine-phosphate synthase family. The cofactor is Mg(2+).

It catalyses the reaction 2-[(2R,5Z)-2-carboxy-4-methylthiazol-5(2H)-ylidene]ethyl phosphate + 4-amino-2-methyl-5-(diphosphooxymethyl)pyrimidine + 2 H(+) = thiamine phosphate + CO2 + diphosphate. The enzyme catalyses 2-(2-carboxy-4-methylthiazol-5-yl)ethyl phosphate + 4-amino-2-methyl-5-(diphosphooxymethyl)pyrimidine + 2 H(+) = thiamine phosphate + CO2 + diphosphate. The catalysed reaction is 4-methyl-5-(2-phosphooxyethyl)-thiazole + 4-amino-2-methyl-5-(diphosphooxymethyl)pyrimidine + H(+) = thiamine phosphate + diphosphate. It functions in the pathway cofactor biosynthesis; thiamine diphosphate biosynthesis; thiamine phosphate from 4-amino-2-methyl-5-diphosphomethylpyrimidine and 4-methyl-5-(2-phosphoethyl)-thiazole: step 1/1. Condenses 4-methyl-5-(beta-hydroxyethyl)thiazole monophosphate (THZ-P) and 2-methyl-4-amino-5-hydroxymethyl pyrimidine pyrophosphate (HMP-PP) to form thiamine monophosphate (TMP). This chain is Thiamine-phosphate synthase, found in Lawsonia intracellularis (strain PHE/MN1-00).